Here is a 412-residue protein sequence, read N- to C-terminus: Peptidase T (412 aa).

His81 is a binding site for Zn(2+). Asp83 is an active-site residue. Zn(2+) is bound at residue Asp144. Residue Glu178 is the Proton acceptor of the active site. The Zn(2+) site is built by Glu179, Asp201, and His383.

The protein belongs to the peptidase M20B family. It depends on Zn(2+) as a cofactor.

The protein localises to the cytoplasm. The catalysed reaction is Release of the N-terminal residue from a tripeptide.. Its function is as follows. Cleaves the N-terminal amino acid of tripeptides. This chain is Peptidase T, found in Bacillus cereus (strain ATCC 14579 / DSM 31 / CCUG 7414 / JCM 2152 / NBRC 15305 / NCIMB 9373 / NCTC 2599 / NRRL B-3711).